Reading from the N-terminus, the 145-residue chain is D-aminoacyl-tRNA deacylase (145 aa).

Residues 137 to 138 carry the Gly-cisPro motif, important for rejection of L-amino acids motif; it reads GP.

This sequence belongs to the DTD family. As to quaternary structure, homodimer.

The protein resides in the cytoplasm. It carries out the reaction glycyl-tRNA(Ala) + H2O = tRNA(Ala) + glycine + H(+). The catalysed reaction is a D-aminoacyl-tRNA + H2O = a tRNA + a D-alpha-amino acid + H(+). Functionally, an aminoacyl-tRNA editing enzyme that deacylates mischarged D-aminoacyl-tRNAs. Also deacylates mischarged glycyl-tRNA(Ala), protecting cells against glycine mischarging by AlaRS. Acts via tRNA-based rather than protein-based catalysis; rejects L-amino acids rather than detecting D-amino acids in the active site. By recycling D-aminoacyl-tRNA to D-amino acids and free tRNA molecules, this enzyme counteracts the toxicity associated with the formation of D-aminoacyl-tRNA entities in vivo and helps enforce protein L-homochirality. This Salmonella paratyphi A (strain AKU_12601) protein is D-aminoacyl-tRNA deacylase.